The sequence spans 1079 residues: Extracellular calcium-sensing receptor (1079 aa).

Positions 1–19 (MAWFGYCLALLALTWHSSA) are cleaved as a signal peptide. Topologically, residues 20-610 (YGPDQRAQKK…KEIEFLAWTE (591 aa)) are extracellular. The tract at residues 22 to 188 (PDQRAQKKGD…QFKSFLRTIP (167 aa)) is ligand-binding 1 (LB1). The cysteines at positions 60 and 101 are disulfide-linked. A phosphate-binding site is contributed by 66 to 70 (RGFRW). Ca(2+) contacts are provided by Ile-81, Ser-84, Leu-87, and Leu-88. An N-linked (GlcNAc...) asparagine glycan is attached at Asn-90. Thr-100 lines the Ca(2+) pocket. Asn-130 is a glycosylation site (N-linked (GlcNAc...) asparagine). Residue Thr-145 coordinates Ca(2+). Positions 147, 168, and 170 each coordinate L-tryptophan. Ca(2+)-binding residues include Ser-170, Pro-188, Asp-190, Glu-231, and Asp-234. Residues 189–324 (NDEHQATAMA…GGTIGFGLKA (136 aa)) are ligand-binding 2 (LB2). Intrachain disulfides connect Cys-236–Cys-561, Cys-358–Cys-395, Cys-437–Cys-449, Cys-542–Cys-562, Cys-546–Cys-565, Cys-568–Cys-582, and Cys-585–Cys-598. Positions 238 and 240 each coordinate spermine. Residues Asn-261 and Asn-287 are each glycosylated (N-linked (GlcNAc...) asparagine). Glu-297 contributes to the Ca(2+) binding site. An L-tryptophan-binding site is contributed by Glu-297. N-linked (GlcNAc...) asparagine glycosylation is present at Asn-386. 415-417 (RIS) contacts phosphate. N-linked (GlcNAc...) asparagine glycosylation is found at Asn-446, Asn-468, and Asn-488. Ca(2+) is bound at residue Tyr-489. N-linked (GlcNAc...) asparagine glycosylation occurs at Asn-541. The tract at residues 542 to 612 (CSRDCQAGTR…IEFLAWTEPF (71 aa)) is cysteine-rich (CR). Gly-557 contributes to the Ca(2+) binding site. Residue Asn-594 is glycosylated (N-linked (GlcNAc...) asparagine). The chain crosses the membrane as a helical span at residues 611–636 (PFGIALTLFAVLGIFLTAFVLGVFIK). The Cytoplasmic segment spans residues 637–648 (FRNTPIVKATNR). Residues 637-648 (FRNTPIVKATNR) are intracellular loop 1 (ICL1). The chain crosses the membrane as a helical span at residues 649 to 668 (ELSYLLLFSLLCCFSSSLFF). Residues 669–674 (IGEPQD) lie on the Extracellular side of the membrane. The helical transmembrane segment at 675–698 (WTCRLRQPAFGISFVLCISCILVK) threads the bilayer. Residues 699–722 (TNRVLLVFEAKIPTSFHRKWWGLN) lie on the Cytoplasmic side of the membrane. Positions 699 to 722 (TNRVLLVFEAKIPTSFHRKWWGLN) are intracellular loop 2 (ICL2). The chain crosses the membrane as a helical span at residues 723-745 (LQFLLVFLCTFMQIVICIIWLYT). Over 746-769 (APPSSYRNHELEDEIIFITCHEGS) the chain is Extracellular. Residues 770–789 (LMALGSLIGYTCLLAAICFF) form a helical membrane-spanning segment. The Cytoplasmic segment spans residues 790–805 (FAFKSRKLPENFNEAK). An intracellular loop 3 (ICL3) region spans residues 790 to 805 (FAFKSRKLPENFNEAK). A helical transmembrane segment spans residues 806–828 (FITFSMLIFFIVWISFIPAYAST). Residues 829-832 (YGKF) are Extracellular-facing. A helical membrane pass occupies residues 833 to 854 (VSAVEVIAILAASFGLLACIFF). Over 855-1079 (NKVYIILFKP…SSVTENILHS (225 aa)) the chain is Cytoplasmic. Residues 855 to 1079 (NKVYIILFKP…SSVTENILHS (225 aa)) are C-terminus. An interaction with RNF19A region spans residues 880–900 (AFKVAARATLRRPNISRKRSS). Phosphothreonine is present on Thr-888. The arginine-rich retention motif stretch occupies residues 890 to 898 (RRPNISRKR). Residues 894 to 964 (ISRKRSSSLG…QQQPQQPRCK (71 aa)) are disordered. At Ser-899 the chain carries Phosphoserine. Over residues 900–918 (SSLGGSTGSIPSSSISSKS) the composition is skewed to low complexity. The segment covering 919 to 931 (NSEDRFPQPERQK) has biased composition (basic and acidic residues). Ser-920 is modified (phosphoserine). The span at 932–961 (QQQPLALTQQEQQQQPLTLQPQQQQQPQQP) shows a compositional bias: low complexity. Position 1062 is a phosphoserine (Ser-1062).

It belongs to the G-protein coupled receptor 3 family. As to quaternary structure, homodimer; disulfide-linked. Interacts with VCP. Interacts with ARRB1. Post-translationally, phosphorylation at Thr-888 by PKC impairs coupling with G(q)/G(11) G-proteins, while it does not affect G(i)/G(o)-coupling. Phosphorylation at Ser-899 by PKA promote plasma membrane localization. Ubiquitinated by RNF19A; which induces proteasomal degradation. Epidermis, kidney and cartilage.

The protein localises to the cell membrane. Its activity is regulated as follows. In resting state, adopts an open conformation, anion-binding promoting the inactive configuration. Upon aromatic amino acid-binding, the groove in the extracellular venus flytrap module is closed, thereby inducing the formation of a novel homodimer interface between subunits. Calcium ions stabilize the active state by enhancing homodimer interactions between membrane-proximal domains to fully activate the receptor. Upon activation, the homodimer adopts an asymmetric configuration of the 7-transmembrane region that primes one protomer for G-protein coupling. G-protein binding expands the transmembrane dimer interface; the restriction imposed by the receptor dimer, in combination with intracellular loop 2 (ICL2), enables G-protein activation by facilitating conformational transition of G-protein alpha. Coupling to different classes of G-proteins results in distinct CASR-G-protein interfaces. In terms of biological role, G-protein-coupled receptor that senses changes in the extracellular concentration of calcium ions and plays a key role in maintaining calcium homeostasis. Senses fluctuations in the circulating calcium concentration: activated by elevated circulating calcium, leading to decreased parathyroid hormone (PTH) secretion in parathyroid glands. In kidneys, acts as a key regulator of renal tubular calcium resorption. Ligand binding causes a conformation change that triggers signaling via guanine nucleotide-binding proteins (G-proteins) and modulates the activity of downstream effectors. CASR is coupled with different G(q)/G(11), G(i)/G(o)- or G(s)-classes of G-proteins depending on the context. In the parathyroid and kidney, CASR signals through G(q)/G(11) and G(i)/G(o) G-proteins: G(q)/G(11) coupling activates phospholipase C-beta, releasing diacylglycerol (DAG) and inositol 1,4,5-trisphosphate (IP3) second messengers, while G(i)/G(o) coupling mediates inhibition of adenylate cyclase activity. The G-protein-coupled receptor activity is activated by a co-agonist mechanism: aromatic amino acids, such as Trp or Phe, act concertedly with divalent cations, such as calcium or magnesium, to achieve full receptor activation. Acts as an activator of the NLRP3 inflammasome via G(i)/G(o)-mediated signaling: down-regulation of cyclic AMP (cAMP) relieving NLRP3 inhibition by cAMP. Acts as a regulator of proton-sensing receptor GPR68 in a seesaw manner: CASR-mediated signaling inhibits GPR68 signaling in response to extracellular calcium, while GPR68 inhibits CASR in presence of extracellular protons. The protein is Extracellular calcium-sensing receptor of Mus musculus (Mouse).